Here is a 325-residue protein sequence, read N- to C-terminus: DNA-directed RNA polymerase subunit alpha (325 aa).

The alpha N-terminal domain (alpha-NTD) stretch occupies residues 1–231 (MQTSLLKPKI…DQLSVFAALE (231 aa)). Residues 246 to 325 (IDPILLRPVD…ENWPPAGLDK (80 aa)) are alpha C-terminal domain (alpha-CTD).

This sequence belongs to the RNA polymerase alpha chain family. As to quaternary structure, homodimer. The RNAP catalytic core consists of 2 alpha, 1 beta, 1 beta' and 1 omega subunit. When a sigma factor is associated with the core the holoenzyme is formed, which can initiate transcription.

It catalyses the reaction RNA(n) + a ribonucleoside 5'-triphosphate = RNA(n+1) + diphosphate. DNA-dependent RNA polymerase catalyzes the transcription of DNA into RNA using the four ribonucleoside triphosphates as substrates. The polypeptide is DNA-directed RNA polymerase subunit alpha (Burkholderia orbicola (strain MC0-3)).